A 571-amino-acid chain; its full sequence is E3 ubiquitin-protein ligase ipaH3 (571 aa).

An interaction with target proteins region spans residues Met-1–His-260. LRR repeat units lie at residues Ile-58 to Gln-81, Thr-83 to Pro-99, Ala-100 to Pro-119, Ala-120 to Tyr-144, Asn-146 to Pro-159, Thr-160 to Ala-184, Asp-186 to Asn-202, Ser-205 to Leu-229, and Thr-232 to His-260. Residues Ser-269–Arg-278 form a linker region. In terms of domain architecture, NEL spans Pro-279–Ser-571. The tract at residues Pro-279–Ser-571 is E3 ubiquitin-protein ligase catalytic domain. Catalysis depends on Cys-363, which acts as the Glycyl thioester intermediate.

Belongs to the LRR-containing bacterial E3 ligase family. In terms of processing, ubiquitinated in the presence of host E1 ubiquitin-activating enzyme, E2 ubiquitin-conjugating enzyme UBE2D3 and ubiquitin.

Its subcellular location is the secreted. The protein localises to the host cytoplasm. It carries out the reaction S-ubiquitinyl-[E2 ubiquitin-conjugating enzyme]-L-cysteine + [acceptor protein]-L-lysine = [E2 ubiquitin-conjugating enzyme]-L-cysteine + N(6)-ubiquitinyl-[acceptor protein]-L-lysine.. In terms of biological role, effector proteins function to alter host cell physiology and promote bacterial survival in host tissues. This protein is an E3 ubiquitin ligase that interferes with host's ubiquitination pathway. Synthesizes a 'Lys-48'-linked ubiquitin chain, which requires non-covalent binding between ubiquitin and the host ubiquitin-conjugating enzyme UBE2D1. The chain is E3 ubiquitin-protein ligase ipaH3 (ipaH3) from Shigella flexneri.